Here is a 424-residue protein sequence, read N- to C-terminus: Interferon regulatory factor 8 (424 aa).

Residues 7 to 114 constitute a DNA-binding region (IRF tryptophan pentad repeat); the sequence is GRRLRQWLIE…EPYKVYRIVP (108 aa).

It belongs to the IRF family. In terms of assembly, interacts with COPS2. Interacts (via C-terminus) with TRIM21 (via C-terminus). Interacts with the BATF-JUNB heterodimer. Interacts with BATF (via bZIP domain); the interaction is direct. Interacts with SPI1. Ubiquitinated. Ubiquitination by TRIM21 in macrophages, a process that is strongly increased upon interferon gamma stimulation, leds to the enhanced transcriptional activity of target cytokine genes. Ubiquitination leads to its degradation by the proteasome. In terms of processing, sumoylated with SUMO3. Desumoylated by SENP1. In terms of tissue distribution, expressed in bone marrow macrophages (at protein level). Mainly expressed in lymphoid tissues. Predominantly expressed in CD8(+)-expressing dendritic cells.

The protein localises to the nucleus. It is found in the cytoplasm. Functionally, transcription factor that specifically binds to the upstream regulatory region of type I interferon (IFN) and IFN-inducible MHC class I genes (the interferon consensus sequence (ICS)). Can both act as a transcriptional activator or repressor. Plays a negative regulatory role in cells of the immune system. Involved in CD8(+) dendritic cell differentiation by forming a complex with the BATF-JUNB heterodimer in immune cells, leading to recognition of AICE sequence (5'-TGAnTCA/GAAA-3'), an immune-specific regulatory element, followed by cooperative binding of BATF and IRF8 and activation of genes. Required for the development of plasmacytoid dendritic cells (pDCs), which produce most of the type I IFN in response to viral infection. Positively regulates macroautophagy in dendritic cells. Acts as a transcriptional repressor of osteoclast differentiation factors such as NFATC1 and EEIG1. The protein is Interferon regulatory factor 8 of Mus musculus (Mouse).